The primary structure comprises 794 residues: Alpha-1,3-galactosidase B (794 aa).

The signal sequence occupies residues 1–57; the sequence is MEGNLSFSLMEASGRSIFFLIEGIREQSIKNMFSRMFSWSFVVAACLAGLFPAQSQG. 5 PbH1 repeats span residues 468-499, 609-631, 632-654, 665-686, and 707-728; these read SEDFHMKGGGVMVRKGTGRVHTAGADATHFSN, YPSVVFRNNIVRNNRARGSLFTT, PERVLVEGNLFDHSSGSAILLAG, CHEVVIRKNTFINNLTSRYQFT, and HRNVLIENNVFKTFDVPLLFAI.

The protein belongs to the glycosyl hydrolase 110 family. B subfamily.

It catalyses the reaction Hydrolysis of terminal, non-reducing branched (1-&gt;3)-alpha-D-galactosidic residues, producing free D-galactose.. The enzyme catalyses Hydrolysis of terminal, non-reducing linear (1-&gt;3)-alpha-D-galactosidic residues, producing free D-galactose.. The catalysed reaction is Hydrolysis of terminal, non-reducing alpha-D-galactose residues in alpha-D-galactosides, including galactose oligosaccharides, galactomannans and galactolipids.. Alpha-galactosidase. Removes both branched alpha-1,3-linked galactose residues of blood group B antigens and linear alpha-1,3-linked galactose structures. The chain is Alpha-1,3-galactosidase B (glaB) from Akkermansia muciniphila (strain ATCC BAA-835 / DSM 22959 / JCM 33894 / BCRC 81048 / CCUG 64013 / CIP 107961 / Muc).